The sequence spans 320 residues: ATP-dependent 6-phosphofructokinase (320 aa).

Gly-12 contacts ATP. Residue 22 to 26 coordinates ADP; that stretch reads RGVVR. ATP-binding positions include 73–74 and 103–106; these read RF and GDGS. Asp-104 serves as a coordination point for Mg(2+). A substrate-binding site is contributed by 126 to 128; it reads TID. Asp-128 acts as the Proton acceptor in catalysis. An ADP-binding site is contributed by Arg-155. Substrate contacts are provided by residues Arg-163 and 170–172; that span reads MGR. Residues 186–188, Lys-212, and 214–216 each bind ADP; these read GCE and KKH. Residues Glu-223, Arg-244, and 250–253 contribute to the substrate site; that span reads HIQR.

Belongs to the phosphofructokinase type A (PFKA) family. ATP-dependent PFK group I subfamily. Prokaryotic clade 'B1' sub-subfamily. In terms of assembly, homotetramer. Mg(2+) serves as cofactor.

It localises to the cytoplasm. The enzyme catalyses beta-D-fructose 6-phosphate + ATP = beta-D-fructose 1,6-bisphosphate + ADP + H(+). Its pathway is carbohydrate degradation; glycolysis; D-glyceraldehyde 3-phosphate and glycerone phosphate from D-glucose: step 3/4. Allosterically activated by ADP and other diphosphonucleosides, and allosterically inhibited by phosphoenolpyruvate. Its function is as follows. Catalyzes the phosphorylation of D-fructose 6-phosphate to fructose 1,6-bisphosphate by ATP, the first committing step of glycolysis. The chain is ATP-dependent 6-phosphofructokinase from Vibrio vulnificus (strain CMCP6).